The primary structure comprises 673 residues: Protein VirD3 (673 aa).

6 disordered regions span residues 36–73, 171–216, 229–409, 478–497, 520–552, and 585–673; these read VAGEDGRDTSVPTALSRPPIEDMPHGVQETSASGGRLG, SPVN…GTSV, ERDT…LRSS, RLNGERSRSPKTSQASLEDF, EKGKQKISTEADTRFDLGNSSAPRVSPRSVTPL, and DSSR…GCGR. 4 stretches are compositionally biased toward polar residues: residues 171–183, 193–216, 234–246, and 268–277; these read SPVNRAAHSSNWQ, VQPSADRAQNSAQESSTFPDGTSV, SETTRNSGNTISS, and QSLSVTVTTP. Over residues 278–287 the composition is skewed to low complexity; it reads NSNAEASSHS. Residues 288 to 303 show a composition bias toward basic and acidic residues; the sequence is AHTETLDDVSSDRSSE. Composition is skewed to basic and acidic residues over residues 520–534 and 638–673; these read EKGKQKISTEADTRF and AAEHSAIDDIWKRDDRDRRTHPYRGLDSRSREGCGR.

This chain is Protein VirD3 (virD3), found in Agrobacterium fabrum (strain C58 / ATCC 33970) (Agrobacterium tumefaciens (strain C58)).